Here is a 538-residue protein sequence, read N- to C-terminus: Probable bifunctional tRNA threonylcarbamoyladenosine biosynthesis protein (538 aa).

The segment at 1–327 (MIVLICLGIE…FRTDEVEAPW (327 aa)) is kae1. The Fe cation site is built by histidine 111, histidine 115, and tyrosine 132. Residues 132-136 (YVSGG), aspartate 164, glycine 177, glutamate 181, and asparagine 260 each bind L-threonylcarbamoyladenylate. Residue aspartate 288 coordinates Fe cation. The Protein kinase domain occupies 336-538 (KLPDNLIAKG…EIESRGRYTH (203 aa)). ATP-binding positions include 342–350 (IAKGAESDI) and lysine 363. Aspartate 452 (proton acceptor; for kinase activity) is an active-site residue.

This sequence in the N-terminal section; belongs to the KAE1 / TsaD family. The protein in the C-terminal section; belongs to the protein kinase superfamily. Tyr protein kinase family. BUD32 subfamily. As to quaternary structure, component of the KEOPS complex that consists of Kae1, Bud32, Cgi121 and Pcc1; the whole complex dimerizes. Requires Fe(2+) as cofactor.

The protein resides in the cytoplasm. The enzyme catalyses L-seryl-[protein] + ATP = O-phospho-L-seryl-[protein] + ADP + H(+). The catalysed reaction is L-threonyl-[protein] + ATP = O-phospho-L-threonyl-[protein] + ADP + H(+). It carries out the reaction L-threonylcarbamoyladenylate + adenosine(37) in tRNA = N(6)-L-threonylcarbamoyladenosine(37) in tRNA + AMP + H(+). In terms of biological role, required for the formation of a threonylcarbamoyl group on adenosine at position 37 (t(6)A37) in tRNAs that read codons beginning with adenine. Is a component of the KEOPS complex that is probably involved in the transfer of the threonylcarbamoyl moiety of threonylcarbamoyl-AMP (TC-AMP) to the N6 group of A37. The Kae1 domain likely plays a direct catalytic role in this reaction. The Bud32 domain probably displays kinase activity that regulates Kae1 function. This Methanobrevibacter smithii (strain ATCC 35061 / DSM 861 / OCM 144 / PS) protein is Probable bifunctional tRNA threonylcarbamoyladenosine biosynthesis protein.